Reading from the N-terminus, the 297-residue chain is D-alanine--D-alanine ligase (297 aa).

In terms of domain architecture, ATP-grasp spans 103-293 (KEILMHHRMP…FDSFVKSILE (191 aa)). Residue 129 to 180 (ISFPVAVKPSSGGSSIATFKVKSLEELENAYQQASKHGEVMIEQWVTGKEIT) coordinates ATP. Mg(2+) contacts are provided by D247, E260, and N262.

The protein belongs to the D-alanine--D-alanine ligase family. Mg(2+) is required as a cofactor. Mn(2+) serves as cofactor.

Its subcellular location is the cytoplasm. It carries out the reaction 2 D-alanine + ATP = D-alanyl-D-alanine + ADP + phosphate + H(+). Its pathway is cell wall biogenesis; peptidoglycan biosynthesis. In terms of biological role, cell wall formation. This is D-alanine--D-alanine ligase from Francisella philomiragia subsp. philomiragia (strain ATCC 25017 / CCUG 19701 / FSC 153 / O#319-036).